Here is a 786-residue protein sequence, read N- to C-terminus: Endonuclease MutS2 (786 aa).

332–339 (GPNTGGKT) provides a ligand contact to ATP. One can recognise a Smr domain in the interval 711–786 (IDLRGMDSEE…GTGVTVVILK (76 aa)).

Belongs to the DNA mismatch repair MutS family. MutS2 subfamily. Homodimer. Binds to stalled ribosomes, contacting rRNA.

Endonuclease that is involved in the suppression of homologous recombination and thus may have a key role in the control of bacterial genetic diversity. In terms of biological role, acts as a ribosome collision sensor, splitting the ribosome into its 2 subunits. Detects stalled/collided 70S ribosomes which it binds and splits by an ATP-hydrolysis driven conformational change. Acts upstream of the ribosome quality control system (RQC), a ribosome-associated complex that mediates the extraction of incompletely synthesized nascent chains from stalled ribosomes and their subsequent degradation. Probably generates substrates for RQC. The protein is Endonuclease MutS2 of Clostridium perfringens (strain SM101 / Type A).